The primary structure comprises 386 residues: Succinate--CoA ligase [ADP-forming] subunit beta (386 aa).

Residues 9-244 (KEVLRKYGVV…LDEEDADEIE (236 aa)) enclose the ATP-grasp domain. ATP is bound by residues Lys-46, 53–55 (GRG), Glu-99, Ala-102, and Glu-107. Mg(2+)-binding residues include Asn-199 and Asp-213. Residues Asn-264 and 321–323 (GIM) contribute to the substrate site.

Belongs to the succinate/malate CoA ligase beta subunit family. Heterotetramer of two alpha and two beta subunits. Mg(2+) serves as cofactor.

It catalyses the reaction succinate + ATP + CoA = succinyl-CoA + ADP + phosphate. The enzyme catalyses GTP + succinate + CoA = succinyl-CoA + GDP + phosphate. The protein operates within carbohydrate metabolism; tricarboxylic acid cycle; succinate from succinyl-CoA (ligase route): step 1/1. Its function is as follows. Succinyl-CoA synthetase functions in the citric acid cycle (TCA), coupling the hydrolysis of succinyl-CoA to the synthesis of either ATP or GTP and thus represents the only step of substrate-level phosphorylation in the TCA. The beta subunit provides nucleotide specificity of the enzyme and binds the substrate succinate, while the binding sites for coenzyme A and phosphate are found in the alpha subunit. This chain is Succinate--CoA ligase [ADP-forming] subunit beta, found in Azoarcus sp. (strain BH72).